Reading from the N-terminus, the 291-residue chain is 4-diphosphocytidyl-2-C-methyl-D-erythritol kinase (291 aa).

Lys19 is a catalytic residue. An ATP-binding site is contributed by 102-112 (PMGGGIGGGSS). Asp144 is an active-site residue.

The protein belongs to the GHMP kinase family. IspE subfamily.

It carries out the reaction 4-CDP-2-C-methyl-D-erythritol + ATP = 4-CDP-2-C-methyl-D-erythritol 2-phosphate + ADP + H(+). The protein operates within isoprenoid biosynthesis; isopentenyl diphosphate biosynthesis via DXP pathway; isopentenyl diphosphate from 1-deoxy-D-xylulose 5-phosphate: step 3/6. Catalyzes the phosphorylation of the position 2 hydroxy group of 4-diphosphocytidyl-2C-methyl-D-erythritol. In Ectopseudomonas mendocina (strain ymp) (Pseudomonas mendocina), this protein is 4-diphosphocytidyl-2-C-methyl-D-erythritol kinase.